The chain runs to 139 residues: Thioredoxin 2 (139 aa).

A zinc finger lies at 5–18 (CTHCQAINRIPDDR). A Thioredoxin domain is found at 26–139 (GRCGHDLFDG…PFDSWLNESL (114 aa)). Cys64 and Cys67 are disulfide-bonded.

Belongs to the thioredoxin family.

It is found in the cytoplasm. It carries out the reaction [protein]-dithiol + NAD(+) = [protein]-disulfide + NADH + H(+). It catalyses the reaction [protein]-dithiol + NADP(+) = [protein]-disulfide + NADPH + H(+). In terms of biological role, efficient electron donor for the essential enzyme ribonucleotide reductase. Is also able to reduce the interchain disulfide bridges of insulin. This Escherichia coli O6:H1 (strain CFT073 / ATCC 700928 / UPEC) protein is Thioredoxin 2 (trxC).